A 124-amino-acid polypeptide reads, in one-letter code: uncharacterized protein (124 aa).

A GIY-YIG domain is found at 42–118 (DKGGIFMFYN…INTQHSKYNI (77 aa)).

This is an uncharacterized protein from Bacillus subtilis (strain 168).